Here is a 267-residue protein sequence, read N- to C-terminus: Undecaprenyl-diphosphatase (267 aa).

8 consecutive transmembrane segments (helical) span residues 1–21 (MSYFEAFVLALIQGLTEFLPI), 39–59 (QGLAFDVAVHVGTLAAVVIYF), 83–103 (AKLAWMIVIATIPACIFGLVM), 111–131 (LRSAYVIATTTIIFGLLLWWV), 144–164 (AGWKKALFIGIAQALAMIPGT), 189–209 (FLMSIPIITLAGSYLGLKLVT), 218–238 (FLLTGIVTSFISAYLCIHLFL), and 246–266 (MTPFVIYRLILGVGLFAYLLM).

The protein belongs to the UppP family.

It localises to the cell inner membrane. It carries out the reaction di-trans,octa-cis-undecaprenyl diphosphate + H2O = di-trans,octa-cis-undecaprenyl phosphate + phosphate + H(+). Its function is as follows. Catalyzes the dephosphorylation of undecaprenyl diphosphate (UPP). Confers resistance to bacitracin. The protein is Undecaprenyl-diphosphatase of Vibrio vulnificus (strain CMCP6).